The following is a 204-amino-acid chain: CASP-like protein 2U1 (204 aa).

The Cytoplasmic portion of the chain corresponds to 1 to 36; it reads MGVLGGDAHVPIGSQVSPGSVVVTNNESFGHRKLLK. Residues 37 to 57 traverse the membrane as a helical segment; that stretch reads GVDFLVRIKAFAFCLAVIVLL. The Extracellular segment spans residues 58–84; the sequence is KNNVQTTVIAPGIVLQAKYNNTKAPVS. Asparagine 77 carries N-linked (GlcNAc...) asparagine glycosylation. The chain crosses the membrane as a helical span at residues 85-105; the sequence is LLVLASICCGYAFLQAVVSLL. Residues 106-117 are Cytoplasmic-facing; the sequence is SFIRDKRVLNNT. A helical transmembrane segment spans residues 118-138; the sequence is VLAWLTFLLDQVLTYLLLGSA. The Extracellular portion of the chain corresponds to 139-170; the sequence is AATAEAAYIAKRGEDKVQWKAVCGPFKRFCDH. The helical transmembrane segment at 171–191 threads the bilayer; the sequence is FAATVFLSFIAVIAFAVSAAI. Residues 192-204 lie on the Cytoplasmic side of the membrane; it reads SAYYLFRRSKGFK.

The protein belongs to the Casparian strip membrane proteins (CASP) family. As to quaternary structure, homodimer and heterodimers.

Its subcellular location is the cell membrane. The sequence is that of CASP-like protein 2U1 from Selaginella moellendorffii (Spikemoss).